The following is a 432-amino-acid chain: NADH-quinone oxidoreductase subunit D (432 aa).

It belongs to the complex I 49 kDa subunit family. In terms of assembly, NDH-1 is composed of 14 different subunits. Subunits NuoB, C, D, E, F, and G constitute the peripheral sector of the complex.

It is found in the cell membrane. It carries out the reaction a quinone + NADH + 5 H(+)(in) = a quinol + NAD(+) + 4 H(+)(out). Functionally, NDH-1 shuttles electrons from NADH, via FMN and iron-sulfur (Fe-S) centers, to quinones in the respiratory chain. The immediate electron acceptor for the enzyme in this species is believed to be a menaquinone. Couples the redox reaction to proton translocation (for every two electrons transferred, four hydrogen ions are translocated across the cytoplasmic membrane), and thus conserves the redox energy in a proton gradient. The chain is NADH-quinone oxidoreductase subunit D from Mycobacterium marinum (strain ATCC BAA-535 / M).